The primary structure comprises 338 residues: L-serine dehydratase (338 aa).

An N6-(pyridoxal phosphate)lysine modification is found at K39.

It belongs to the serine/threonine dehydratase family. Pyridoxal 5'-phosphate is required as a cofactor.

The protein resides in the cytoplasm. The catalysed reaction is L-serine = pyruvate + NH4(+). It functions in the pathway carbohydrate biosynthesis; gluconeogenesis. This is L-serine dehydratase (SDL1) from Saccharomyces cerevisiae (strain AWRI1631) (Baker's yeast).